A 430-amino-acid chain; its full sequence is Lipoyl synthase, mitochondrial (430 aa).

The N-terminal 37 residues, 1 to 37, are a transit peptide targeting the mitochondrion; sequence MAASTGKLRTLFSAHSSLSARPSSALPALRLTILRSY. Residues 40 to 56 show a composition bias toward low complexity; the sequence is TTPPDSSISDPSNSSTT. The segment at 40 to 63 is disordered; that stretch reads TTPPDSSISDPSNSSTTVKRPPTA. [4Fe-4S] cluster-binding residues include Cys-141, Cys-146, Cys-152, Cys-172, Cys-176, Cys-179, and Ser-387. A Radical SAM core domain is found at 155 to 376; the sequence is GSSKSAATAT…KERALEMGFL (222 aa).

It belongs to the radical SAM superfamily. Lipoyl synthase family. Requires [4Fe-4S] cluster as cofactor.

The protein resides in the mitochondrion. The catalysed reaction is [[Fe-S] cluster scaffold protein carrying a second [4Fe-4S](2+) cluster] + N(6)-octanoyl-L-lysyl-[protein] + 2 oxidized [2Fe-2S]-[ferredoxin] + 2 S-adenosyl-L-methionine + 4 H(+) = [[Fe-S] cluster scaffold protein] + N(6)-[(R)-dihydrolipoyl]-L-lysyl-[protein] + 4 Fe(3+) + 2 hydrogen sulfide + 2 5'-deoxyadenosine + 2 L-methionine + 2 reduced [2Fe-2S]-[ferredoxin]. Its pathway is protein modification; protein lipoylation via endogenous pathway; protein N(6)-(lipoyl)lysine from octanoyl-[acyl-carrier-protein]: step 2/2. Functionally, catalyzes the radical-mediated insertion of two sulfur atoms into the C-6 and C-8 positions of the octanoyl moiety bound to the lipoyl domains of lipoate-dependent enzymes, thereby converting the octanoylated domains into lipoylated derivatives. In Ajellomyces dermatitidis (strain ER-3 / ATCC MYA-2586) (Blastomyces dermatitidis), this protein is Lipoyl synthase, mitochondrial.